The following is a 464-amino-acid chain: L-cystine uptake protein TcyP (464 aa).

10 helical membrane-spanning segments follow: residues 3–23 (TLLVGINVAVMLILVGVLYYM), 34–54 (VFTALGVGILFGLILQFIYEP), 73–93 (YVKLLQMIVMPLILVSIISAF), 107–127 (GLIIGILILTTGIAAAVGIAA), 184–204 (PTSTISVVIFAAFIGIAFIGV), 225–245 (IVMRMVTLILRLTPYGVLALM), 263–283 (FVLASYVALIVMFIIHLLLIA), 347–367 (AGIYPAMLAMMVAPTVGIDPL), 371–391 (FILTLIAVVAISSFGVAGVGG), and 395–415 (FAALIVLSTMNLPIGIVALVI).

The protein belongs to the dicarboxylate/amino acid:cation symporter (DAACS) (TC 2.A.23) family.

It is found in the membrane. Functionally, mediates uptake of L-cystine, the oxidized form of L-cysteine. In Bacillus cereus (strain ATCC 14579 / DSM 31 / CCUG 7414 / JCM 2152 / NBRC 15305 / NCIMB 9373 / NCTC 2599 / NRRL B-3711), this protein is L-cystine uptake protein TcyP.